Here is a 92-residue protein sequence, read N- to C-terminus: Small ribosomal subunit protein uS19 (92 aa).

This sequence belongs to the universal ribosomal protein uS19 family.

Protein S19 forms a complex with S13 that binds strongly to the 16S ribosomal RNA. The chain is Small ribosomal subunit protein uS19 from Rhodopseudomonas palustris (strain BisB18).